Consider the following 1391-residue polypeptide: DNA-directed RNA polymerase subunit beta'' (1391 aa).

Positions 220, 291, 298, and 301 each coordinate Zn(2+).

The protein belongs to the RNA polymerase beta' chain family. RpoC2 subfamily. As to quaternary structure, in plastids the minimal PEP RNA polymerase catalytic core is composed of four subunits: alpha, beta, beta', and beta''. When a (nuclear-encoded) sigma factor is associated with the core the holoenzyme is formed, which can initiate transcription. The cofactor is Zn(2+).

The protein localises to the plastid. Its subcellular location is the chloroplast. It catalyses the reaction RNA(n) + a ribonucleoside 5'-triphosphate = RNA(n+1) + diphosphate. Its function is as follows. DNA-dependent RNA polymerase catalyzes the transcription of DNA into RNA using the four ribonucleoside triphosphates as substrates. The sequence is that of DNA-directed RNA polymerase subunit beta'' from Gossypium barbadense (Sea Island cotton).